The following is an 874-amino-acid chain: Probable inorganic carbon transporter subunit DabA (874 aa).

The Zn(2+) site is built by Cys-398, Asp-400, His-580, and Cys-595.

It belongs to the inorganic carbon transporter (TC 9.A.2) DabA family. Forms a complex with DabB. It depends on Zn(2+) as a cofactor.

It is found in the cell membrane. Functionally, part of an energy-coupled inorganic carbon pump. The polypeptide is Probable inorganic carbon transporter subunit DabA (Bacillus cereus (strain ZK / E33L)).